Here is a 1011-residue protein sequence, read N- to C-terminus: Antigenic heat-stable 120 kDa protein (1011 aa).

3 disordered regions span residues 1 to 37 (DTSE…TPAL), 54 to 73 (TPSM…TSDP), and 348 to 396 (GQSK…PQSQ). Basic and acidic residues predominate over residues 12 to 27 (EYTEEQKQTEEQEQKE). Polar residues-rich tracts occupy residues 348 to 373 (GQSK…QYKQ) and 380 to 396 (PTNQ…PQSQ).

Its subcellular location is the cytoplasm. This chain is Antigenic heat-stable 120 kDa protein (sca4), found in Rickettsia sibirica subsp. mongolitimonae (Rickettsia mongolotimonae).